The sequence spans 111 residues: Nucleoid-associated protein Ppha_1174 (111 aa).

Belongs to the YbaB/EbfC family. In terms of assembly, homodimer.

It localises to the cytoplasm. The protein localises to the nucleoid. Its function is as follows. Binds to DNA and alters its conformation. May be involved in regulation of gene expression, nucleoid organization and DNA protection. In Pelodictyon phaeoclathratiforme (strain DSM 5477 / BU-1), this protein is Nucleoid-associated protein Ppha_1174.